The chain runs to 134 residues: Profilin-2 (134 aa).

Position 114 is a phosphothreonine (threonine 114).

Belongs to the profilin family. In terms of assembly, occurs in many kinds of cells as a complex with monomeric actin in a 1:1 ratio. In terms of processing, phosphorylated by MAP kinases.

It is found in the cytoplasm. The protein localises to the cytoskeleton. Functionally, binds to actin and affects the structure of the cytoskeleton. At high concentrations, profilin prevents the polymerization of actin, whereas it enhances it at low concentrations. By binding to PIP2, it inhibits the formation of IP3 and DG. In Nicotiana tabacum (Common tobacco), this protein is Profilin-2 (PRO2).